A 598-amino-acid chain; its full sequence is Nuclear receptor subfamily 4 group A member 2 (598 aa).

The disordered stretch occupies residues 1-22; the sequence is MPCVQAQYGSSPQGASPASQSY. Over residues 8-22 the composition is skewed to low complexity; sequence YGSSPQGASPASQSY. Residues 260–335 constitute a DNA-binding region (nuclear receptor); the sequence is EGLCAVCGDN…VGMVKEVVRT (76 aa). 2 NR C4-type zinc fingers span residues 263–283 and 299–323; these read CAVC…CEGC and CLAN…FQKC. Residues 287–314 carry the Bipartite nuclear localization signal (NLS1) motif; that stretch reads FKRTVQKNAKYVCLANKNCPVDKRRRNR. Residues 337–361 are disordered; the sequence is SLKGRRGRLPSKPKSPQEPSPPSPP. The short motif at 338-350 is the Nuclear localization signal (NLS1) element; sequence LKGRRGRLPSKPK. Residues 352-361 are compositionally biased toward pro residues; sequence PQEPSPPSPP. One can recognise an NR LBD domain in the interval 360–595; sequence PPVSLISALV…AIIDKLFLDT (236 aa). The nuclear export sequence (NES1) signature appears at 443–452; sequence FLELFVLRLA. Residues 568–577 carry the nuclear export sequence (NES2) motif; sequence QGLQRIFYLK.

This sequence belongs to the nuclear hormone receptor family. NR4 subfamily. In terms of assembly, interacts with SFPQ, NCOR2, SIN3A and HADC1. The interaction with NCOR2 increases in the absence of PITX3. Interacts with PER2. As to expression, expressed in a number of cell lines of T-cell, B-cell and fibroblast origin. Strong expression in brain tissue.

The protein localises to the cytoplasm. It localises to the nucleus. Functionally, transcriptional regulator which is important for the differentiation and maintenance of meso-diencephalic dopaminergic (mdDA) neurons during development. It is crucial for expression of a set of genes such as SLC6A3, SLC18A2, TH and DRD2 which are essential for development of mdDA neurons. The sequence is that of Nuclear receptor subfamily 4 group A member 2 (NR4A2) from Homo sapiens (Human).